A 655-amino-acid chain; its full sequence is Probable replication factor A 73 kDa subunit (655 aa).

Positions 195–217 are disordered; it reads NRAAAPEATRARAVPPPARRTAS. Residues 196–207 are compositionally biased toward low complexity; it reads RAAAPEATRARA. Residues 236 to 326 constitute a DNA-binding region (OB); the sequence is FKIHGMVSRK…TLRSDSIIEA (91 aa). Residues 518 to 539 form a C4-type zinc finger; the sequence is CASEGCQKKLVGENGDYRCEKC.

It belongs to the replication factor A protein 1 family. In terms of assembly, component of the heterotrimeric canonical replication protein A complex (RPA).

The protein localises to the nucleus. Its function is as follows. As part of the heterotrimeric replication protein A complex (RPA/RP-A), binds and stabilizes single-stranded DNA intermediates, that form during DNA replication or upon DNA stress. It prevents their reannealing and in parallel, recruits and activates different proteins and complexes involved in DNA metabolism. Thereby, it plays an essential role both in DNA replication and the cellular response to DNA damage. The polypeptide is Probable replication factor A 73 kDa subunit (Caenorhabditis elegans).